Consider the following 254-residue polypeptide: Isoprenyl transferase (254 aa).

The active site involves aspartate 24. Aspartate 24 lines the Mg(2+) pocket. Substrate is bound by residues 25-28 (GNGR), tryptophan 29, arginine 37, histidine 41, and 69-71 (SSE). Asparagine 72 functions as the Proton acceptor in the catalytic mechanism. Substrate contacts are provided by residues tryptophan 73, arginine 75, arginine 192, and 198-200 (RIS). Glutamate 211 is a binding site for Mg(2+).

It belongs to the UPP synthase family. Homodimer. Mg(2+) is required as a cofactor.

Catalyzes the condensation of isopentenyl diphosphate (IPP) with allylic pyrophosphates generating different type of terpenoids. The chain is Isoprenyl transferase from Bordetella parapertussis (strain 12822 / ATCC BAA-587 / NCTC 13253).